Here is a 420-residue protein sequence, read N- to C-terminus: Transcription factor IIIB 50 kDa subunit (420 aa).

The segment at 3–36 adopts a TFIIB-type zinc-finger fold; the sequence is NGSRCPDCGSSELVEDSHYSQSQLVCSDCGCVVT. Zn(2+) is bound by residues cysteine 7, cysteine 10, cysteine 28, and cysteine 31. 2 consecutive repeat copies span residues 72-157 and 173-249. The tract at residues 108–114 is interaction with target DNA; the sequence is AARLQKK. The disordered stretch occupies residues 316-387; it reads TAEVETQQQQ…AVTGDEDISD (72 aa). Over residues 322–336 the composition is skewed to low complexity; sequence QQQQQQQQGQGQGQQ. Serine 354 bears the Phosphoserine mark. Residues 358-364 form a required for the formation of a ternary complex with DNA and TBP; not required for interaction with TBP in the absence of DNA region; sequence LLPPCML. The residue at position 362 (cysteine 362) is a Cysteine sulfenic acid (-SOH). The interval 366-420 is required for interaction with TBP and formation of a ternary complex with DNA and TBP; it reads PPKRTHTLPPESAVTGDEDISDSEIEQYLRTPQEVRDFERAQAASQAAMRVPNPP.

This sequence belongs to the TFIIB family. In terms of assembly, component of TFIIIB complexes. The TFIIIB complex has two activities, alpha and beta. The TFIIIB-alpha activity complex is composed of TBP, BDP1, and a complex containing both BRF2 and at least four stably associated proteins; this complex inhibits the transcription by pol III via its phosphorylation by CK2; YY1 facilitates the TFIIIB-alpha complex formation. Interacts with TBP; this interaction promotes recruitment of BRF2 to TATA box-containing promoters. Interacts with TBP and the BURE sequence (GC-rich sequence downstream from the TATA box) to form a strong ternary complex which is joined by BDP1; this ternary complex stimulates pol III transcription. Forms a trimeric complex composed of TBP, BRF2 and mini-SNAPc complex (SNAP43, SNAP50, and the N-terminal third of SNAP190) on the promoter. Assembly of the TBP-BRF2 complex is stimulated by SNAP190. Interacts with MAF1 and SNAPC4. In response to oxidative stress, Cys-362 is reversibly oxidized to cysteine sulfenic acid. Oxidation of Cys-362 impairs formation of a ternary complex with TBP and DNA and down-regulates expression of target genes in response to oxidative stress.

The protein localises to the nucleus. Its function is as follows. General activator of RNA polymerase III transcription. Factor exclusively required for RNA polymerase III transcription of genes with promoter elements upstream of the initiation sites. Contributes to the regulation of gene expression; functions as activator in the absence of oxidative stress. Down-regulates expression of target genes in response to oxidative stress. Overexpression protects cells against apoptosis in response to oxidative stress. This is Transcription factor IIIB 50 kDa subunit (Brf2) from Mus musculus (Mouse).